The following is a 169-amino-acid chain: Large ribosomal subunit protein uL10 (169 aa).

It belongs to the universal ribosomal protein uL10 family. In terms of assembly, part of the ribosomal stalk of the 50S ribosomal subunit. The N-terminus interacts with L11 and the large rRNA to form the base of the stalk. The C-terminus forms an elongated spine to which L12 dimers bind in a sequential fashion forming a multimeric L10(L12)X complex.

Forms part of the ribosomal stalk, playing a central role in the interaction of the ribosome with GTP-bound translation factors. The sequence is that of Large ribosomal subunit protein uL10 from Rickettsia africae (strain ESF-5).